Here is a 262-residue protein sequence, read N- to C-terminus: Phosphatidylserine decarboxylase proenzyme (262 aa).

Catalysis depends on charge relay system; for autoendoproteolytic cleavage activity residues aspartate 86, histidine 142, and serine 226. Serine 226 acts as the Schiff-base intermediate with substrate; via pyruvic acid; for decarboxylase activity in catalysis. Serine 226 is subject to Pyruvic acid (Ser); by autocatalysis.

The protein belongs to the phosphatidylserine decarboxylase family. PSD-B subfamily. Prokaryotic type I sub-subfamily. Heterodimer of a large membrane-associated beta subunit and a small pyruvoyl-containing alpha subunit. It depends on pyruvate as a cofactor. In terms of processing, is synthesized initially as an inactive proenzyme. Formation of the active enzyme involves a self-maturation process in which the active site pyruvoyl group is generated from an internal serine residue via an autocatalytic post-translational modification. Two non-identical subunits are generated from the proenzyme in this reaction, and the pyruvate is formed at the N-terminus of the alpha chain, which is derived from the carboxyl end of the proenzyme. The autoendoproteolytic cleavage occurs by a canonical serine protease mechanism, in which the side chain hydroxyl group of the serine supplies its oxygen atom to form the C-terminus of the beta chain, while the remainder of the serine residue undergoes an oxidative deamination to produce ammonia and the pyruvoyl prosthetic group on the alpha chain. During this reaction, the Ser that is part of the protease active site of the proenzyme becomes the pyruvoyl prosthetic group, which constitutes an essential element of the active site of the mature decarboxylase.

The protein localises to the cell membrane. It carries out the reaction a 1,2-diacyl-sn-glycero-3-phospho-L-serine + H(+) = a 1,2-diacyl-sn-glycero-3-phosphoethanolamine + CO2. It functions in the pathway phospholipid metabolism; phosphatidylethanolamine biosynthesis; phosphatidylethanolamine from CDP-diacylglycerol: step 2/2. Its function is as follows. Catalyzes the formation of phosphatidylethanolamine (PtdEtn) from phosphatidylserine (PtdSer). The protein is Phosphatidylserine decarboxylase proenzyme of Bacillus mycoides (strain KBAB4) (Bacillus weihenstephanensis).